Reading from the N-terminus, the 209-residue chain is Ribosomal RNA large subunit methyltransferase E (209 aa).

Positions 63, 65, 83, 99, and 124 each coordinate S-adenosyl-L-methionine. Catalysis depends on lysine 164, which acts as the Proton acceptor.

It belongs to the class I-like SAM-binding methyltransferase superfamily. RNA methyltransferase RlmE family.

It is found in the cytoplasm. The enzyme catalyses uridine(2552) in 23S rRNA + S-adenosyl-L-methionine = 2'-O-methyluridine(2552) in 23S rRNA + S-adenosyl-L-homocysteine + H(+). Functionally, specifically methylates the uridine in position 2552 of 23S rRNA at the 2'-O position of the ribose in the fully assembled 50S ribosomal subunit. The sequence is that of Ribosomal RNA large subunit methyltransferase E from Shewanella denitrificans (strain OS217 / ATCC BAA-1090 / DSM 15013).